Reading from the N-terminus, the 282-residue chain is Osteoclast-associated immunoglobulin-like receptor (282 aa).

The first 18 residues, methionine 1–threonine 18, serve as a signal peptide directing secretion. Ig-like domains follow at residues proline 22–serine 116 and glutamate 126–glycine 219. Residue asparagine 48 is glycosylated (N-linked (GlcNAc...) asparagine). Cysteine 53 and cysteine 100 are joined by a disulfide. Asparagine 145 is a glycosylation site (N-linked (GlcNAc...) asparagine). The tract at residues glycine 221 to valine 282 is disordered. Pro residues predominate over residues proline 273–valine 282.

This sequence belongs to the leukocyte receptor complex/polymeric immunoglobulin receptor (PIR/LRC) family.

It is found in the secreted. It localises to the cell membrane. Its function is as follows. Regulator of osteoclastogenesis which plays an important bone-specific function in osteoclast differentiation. The sequence is that of Osteoclast-associated immunoglobulin-like receptor (OSCAR) from Homo sapiens (Human).